The sequence spans 172 residues: 3-hydroxydecanoyl-[acyl-carrier-protein] dehydratase (172 aa).

His71 is an active-site residue.

It belongs to the thioester dehydratase family. FabA subfamily. As to quaternary structure, homodimer.

The protein resides in the cytoplasm. The catalysed reaction is a (3R)-hydroxyacyl-[ACP] = a (2E)-enoyl-[ACP] + H2O. The enzyme catalyses (3R)-hydroxydecanoyl-[ACP] = (2E)-decenoyl-[ACP] + H2O. It catalyses the reaction (2E)-decenoyl-[ACP] = (3Z)-decenoyl-[ACP]. The protein operates within lipid metabolism; fatty acid biosynthesis. Its function is as follows. Necessary for the introduction of cis unsaturation into fatty acids. Catalyzes the dehydration of (3R)-3-hydroxydecanoyl-ACP to E-(2)-decenoyl-ACP and then its isomerization to Z-(3)-decenoyl-ACP. Can catalyze the dehydratase reaction for beta-hydroxyacyl-ACPs with saturated chain lengths up to 16:0, being most active on intermediate chain length. The protein is 3-hydroxydecanoyl-[acyl-carrier-protein] dehydratase of Photorhabdus laumondii subsp. laumondii (strain DSM 15139 / CIP 105565 / TT01) (Photorhabdus luminescens subsp. laumondii).